The chain runs to 211 residues: Small ribosomal subunit protein uS3 (211 aa).

Residues 16 to 85 (IDEYFKGKLV…NPQIEVKPLE (70 aa)) form the KH type-2 domain.

This sequence belongs to the universal ribosomal protein uS3 family. As to quaternary structure, part of the 30S ribosomal subunit.

Binds the lower part of the 30S subunit head. The polypeptide is Small ribosomal subunit protein uS3 (Methanococcus vannielii (strain ATCC 35089 / DSM 1224 / JCM 13029 / OCM 148 / SB)).